Consider the following 437-residue polypeptide: Transcription factor E2F2 (437 aa).

Positions A65–P105 are cyclin A/CDK2 binding. A DNA-binding region spans residues G107–G196. Residues L155–L176 form a leucine-zipper region. The DEF box signature appears at E160 to G196. Residues M197 to I289 are dimerization. Positions V307–L368 are disordered. A compositionally biased stretch (low complexity) spans E315–S330. The segment covering A351–L365 has biased composition (pro residues). The segment at A359–N437 is transactivation. The retinoblastoma protein binding stretch occupies residues D410–D427.

It belongs to the E2F/DP family. In terms of assembly, component of the DRTF1/E2F transcription factor complex. Forms heterodimers with DP family members. The E2F2 complex binds specifically hypophosphorylated retinoblastoma protein RB1. During the cell cycle, RB1 becomes phosphorylated in mid-to-late G1 phase, detaches from the DRTF1/E2F complex, rendering E2F transcriptionally active. Viral oncoproteins, notably E1A, T-antigen and HPV E7, are capable of sequestering RB1, thus releasing the active complex. Binds EAPP. In terms of processing, phosphorylated by CDK2 and cyclin A-CDK2 in the S-phase. In terms of tissue distribution, highest level of expression is found in placenta, low levels are found in lung. Found as well in many immortalized cell lines derived from tumor samples.

The protein resides in the nucleus. Functionally, transcription activator that binds DNA cooperatively with DP proteins through the E2 recognition site, 5'-TTTC[CG]CGC-3' found in the promoter region of a number of genes whose products are involved in cell cycle regulation or in DNA replication. The DRTF1/E2F complex functions in the control of cell-cycle progression from g1 to s phase. E2F2 binds specifically to RB1 in a cell-cycle dependent manner. The sequence is that of Transcription factor E2F2 (E2F2) from Homo sapiens (Human).